The primary structure comprises 800 residues: Putative antiporter subunit mnhA2 (800 aa).

The next 20 helical transmembrane spans lie at 1–21 (MSLV…LLMS), 33–53 (IALV…PSVA), 78–98 (GLSL…FFYA), 118–138 (LFMF…MYIF), 167–187 (FMIT…LYIM), 207–227 (GLFI…SAQF), 241–261 (TPVS…FLLL), 273–293 (YIYI…ITAL), 300–320 (GILA…VGIG), 331–351 (IASI…NHAI), 387–407 (LVMT…GFLS), 424–444 (FSLI…IFTF), 472–492 (PWLF…IFFV), 527–547 (GFNI…VLAI), 595–615 (IIMT…RIGL), 627–647 (GALE…LIFI), 651–671 (LTMV…FIAM), 676–696 (LALT…VSFS), 712–732 (IIKI…IFIT), and 768–788 (LDTL…YTLL).

The protein belongs to the CPA3 antiporters (TC 2.A.63) subunit A family. In terms of assembly, may form a heterooligomeric complex that consists of seven subunits: mnhA2, mnhB2, mnhC2, mnhD2, mnhE2, mnhF2 and mnhG2.

It is found in the cell membrane. The chain is Putative antiporter subunit mnhA2 (mnhA2) from Staphylococcus aureus (strain Mu3 / ATCC 700698).